The primary structure comprises 131 residues: Putative protein PTGES3L (131 aa).

Residues 3–91 (RQPARTLWYD…KEKVAWPRLT (89 aa)) enclose the CS domain.

The protein belongs to the p23/wos2 family.

This is Putative protein PTGES3L (Ptges3l) from Mus musculus (Mouse).